We begin with the raw amino-acid sequence, 316 residues long: 2,3-dihydroxyphenylpropionate/2,3-dihydroxicinnamic acid 1,2-dioxygenase (316 aa).

Residue His-115 is the Proton donor of the active site. The active-site Proton acceptor is the His-180.

This sequence belongs to the LigB/MhpB extradiol dioxygenase family. Homotetramer. The cofactor is Fe(2+).

It catalyses the reaction 3-(2,3-dihydroxyphenyl)propanoate + O2 = (2Z,4E)-2-hydroxy-6-oxonona-2,4-dienedioate + H(+). The catalysed reaction is (2E)-3-(2,3-dihydroxyphenyl)prop-2-enoate + O2 = (2Z,4E,7E)-2-hydroxy-6-oxonona-2,4,7-trienedioate + H(+). The protein operates within aromatic compound metabolism; 3-phenylpropanoate degradation. In terms of biological role, catalyzes the non-heme iron(II)-dependent oxidative cleavage of 2,3-dihydroxyphenylpropionic acid and 2,3-dihydroxicinnamic acid into 2-hydroxy-6-ketononadienedioate and 2-hydroxy-6-ketononatrienedioate, respectively. The sequence is that of 2,3-dihydroxyphenylpropionate/2,3-dihydroxicinnamic acid 1,2-dioxygenase from Rhodococcus rhodochrous.